The chain runs to 451 residues: CBL-interacting protein kinase 10 (451 aa).

The 255-residue stretch at 13–267 folds into the Protein kinase domain; that stretch reads YEIGKLLGQG…VSEIMEDPWF (255 aa). ATP is bound by residues 19-27 and lysine 42; that span reads LGQGSFAKV. Catalysis depends on aspartate 135, which acts as the Proton acceptor. The segment at 153–182 is activation loop; the sequence is DFGLSALAECKRQDGLLHTTCGTPAYVAPE. The NAF domain occupies 304-336; sequence INEGKQEAENLTSLNAFDIISLSSGFDLSAMFE. Positions 341–370 are PPI; that stretch reads KEESKFTSTNTATTITKKLEDVAKNLRLKF.

This sequence belongs to the protein kinase superfamily. CAMK Ser/Thr protein kinase family. SNF1 subfamily. It depends on Mn(2+) as a cofactor.

It carries out the reaction L-seryl-[protein] + ATP = O-phospho-L-seryl-[protein] + ADP + H(+). It catalyses the reaction L-threonyl-[protein] + ATP = O-phospho-L-threonyl-[protein] + ADP + H(+). In terms of biological role, CIPK serine-threonine protein kinases interact with CBL proteins. Binding of a CBL protein to the regulatory NAF domain of CIPK protein lead to the activation of the kinase in a calcium-dependent manner. This Oryza sativa subsp. japonica (Rice) protein is CBL-interacting protein kinase 10 (CIPK10).